Here is a 178-residue protein sequence, read N- to C-terminus: RNA-binding protein (178 aa).

The segment at serine 108–arginine 178 is disordered. The segment covering serine 168–arginine 178 has biased composition (basic residues).

Belongs to the phytoreovirus RNA-binding protein family.

The protein localises to the host cytoplasm. Functionally, constituent of viral factories. Binds to ssRNA and dsRNA. This Wound tumor virus (strain NJ) (WTV) protein is RNA-binding protein.